A 278-amino-acid chain; its full sequence is 4-deoxy-L-threo-5-hexosulose-uronate ketol-isomerase (278 aa).

Histidine 196, histidine 198, glutamate 203, and histidine 245 together coordinate Zn(2+).

This sequence belongs to the KduI family. The cofactor is Zn(2+).

The enzyme catalyses 5-dehydro-4-deoxy-D-glucuronate = 3-deoxy-D-glycero-2,5-hexodiulosonate. Its pathway is glycan metabolism; pectin degradation; 2-dehydro-3-deoxy-D-gluconate from pectin: step 4/5. Its function is as follows. Catalyzes the isomerization of 5-dehydro-4-deoxy-D-glucuronate to 3-deoxy-D-glycero-2,5-hexodiulosonate. This chain is 4-deoxy-L-threo-5-hexosulose-uronate ketol-isomerase, found in Yersinia enterocolitica serotype O:8 / biotype 1B (strain NCTC 13174 / 8081).